A 192-amino-acid chain; its full sequence is Small ribosomal subunit protein uS4B (192 aa).

The region spanning 83–145 (RRLDNLVYRL…SRKIQTYASN (63 aa)) is the S4 RNA-binding domain.

Belongs to the universal ribosomal protein uS4 family. In terms of assembly, part of the 30S ribosomal subunit. Contacts protein S5. The interaction surface between S4 and S5 is involved in control of translational fidelity.

One of the primary rRNA binding proteins, it binds directly to 16S rRNA where it nucleates assembly of the body of the 30S subunit. In terms of biological role, with S5 and S12 plays an important role in translational accuracy. The sequence is that of Small ribosomal subunit protein uS4B (rpsD2) from Clostridium acetobutylicum (strain ATCC 824 / DSM 792 / JCM 1419 / IAM 19013 / LMG 5710 / NBRC 13948 / NRRL B-527 / VKM B-1787 / 2291 / W).